A 232-amino-acid polypeptide reads, in one-letter code: Dehydrin DHN2 (232 aa).

Residues 1 to 12 show a composition bias toward polar residues; sequence MSQYQNQYGAQT. Disordered stretches follow at residues 1 to 92, 131 to 156, and 173 to 232; these read MSQY…STNT, PGTE…SGGG, and PGDK…CTGH. Gly residues predominate over residues 73–82; it reads THTGGVGGYG. Positions 131–140 are enriched in basic and acidic residues; it reads PGTEQSRTHT. The segment covering 143-156 has biased composition (gly residues); the sequence is TGYGSTGYGASGGG. Residues 200-223 are compositionally biased toward basic and acidic residues; sequence YVREEHRVDHGEKKGIMDKIKEKL.

Belongs to the plant dehydrin family.

In Pisum sativum (Garden pea), this protein is Dehydrin DHN2 (DHN2).